The sequence spans 334 residues: MMRSEPRALQLNEHGQLKHFLTLDGLDKTILTEILDRADSFLSMGEQSVKKVPLLRGKTVVNLFFENSTRTRTTFELAAKRLSADVINLNIETSATSKGESLLDTLKNLEAMQSDMFIVRHSDSGAAHFIAEHCTPNVAIINAGDGRHAHPTQAMLDMLTIRRHKGSFDGLKIAIVGDILHSRVARSQLQALTTLGVSDVRLVGPKTLVPSFFEEMGATICHDLEAGLKDVDVVVMLRLQKERMKGALLPSESEFYRLYGLTEETLAWAKPDAIVMHPGPINRGVEISSEVADGKHSVILNQVTNGIAVRMAVMSMAMSGQLQSDETPAAKDEK.

Carbamoyl phosphate contacts are provided by arginine 70 and threonine 71. An L-aspartate-binding site is contributed by lysine 98. Arginine 120, histidine 150, and glutamine 153 together coordinate carbamoyl phosphate. Residues arginine 183 and arginine 238 each contribute to the L-aspartate site. Positions 279 and 280 each coordinate carbamoyl phosphate.

It belongs to the aspartate/ornithine carbamoyltransferase superfamily. ATCase family. As to quaternary structure, heterododecamer (2C3:3R2) of six catalytic PyrB chains organized as two trimers (C3), and six regulatory PyrI chains organized as three dimers (R2).

It catalyses the reaction carbamoyl phosphate + L-aspartate = N-carbamoyl-L-aspartate + phosphate + H(+). It functions in the pathway pyrimidine metabolism; UMP biosynthesis via de novo pathway; (S)-dihydroorotate from bicarbonate: step 2/3. Functionally, catalyzes the condensation of carbamoyl phosphate and aspartate to form carbamoyl aspartate and inorganic phosphate, the committed step in the de novo pyrimidine nucleotide biosynthesis pathway. The sequence is that of Aspartate carbamoyltransferase catalytic subunit from Marinomonas sp. (strain MWYL1).